A 184-amino-acid chain; its full sequence is Large ribosomal subunit protein uL6 (184 aa).

It belongs to the universal ribosomal protein uL6 family. In terms of assembly, part of the 50S ribosomal subunit.

This protein binds to the 23S rRNA, and is important in its secondary structure. It is located near the subunit interface in the base of the L7/L12 stalk, and near the tRNA binding site of the peptidyltransferase center. This chain is Large ribosomal subunit protein uL6, found in Amoebophilus asiaticus (strain 5a2).